A 492-amino-acid chain; its full sequence is MDPSSKKVTGRLMLAVGGAVLGSLQFGYNTGVINAPQKVIEEFYNQTWNHRYGEPIPSTTLTTLWSLSVAIFSVGGMIGSFSVGLFVNRFGRRNSMLMMNLLAFVAAVLMGFSKLGKSFEMLILGRFIIGVYCGLTTGFVPMYVGEVSPTALRGALGTLHQLGIVVGILIAQVFGLDSIMGNADLWPLLLSVIFIPALLQCILLPFCPESPRFLLINRNEENRAKSVLKKLRGTADVTRDLQEMKEEGRQMMREKKVTILELFRSPAYRQPILIAVVLQLSQQLSGINAVFYYSTSIFEKAGVQQPVYATIGSGIVNTAFTVVSLFVVERAGRRTLHLIGLAGMAGCAVLMTIALALLERLPWMSYLSIVAIFGFVAFFEVGPGPIPWFIVAELFSQGPRPAAIAVAGFSNWTSNFIVGMCFQYVEQLCGPYVFIIFTVLLVLFFIFTYFKVPETKGRTFDEIASGFRQGGASQSDKTPEELFHPLGADSQV.

Met1 is modified (N-acetylmethionine). The Cytoplasmic segment spans residues 1–11 (MDPSSKKVTGR). The helical transmembrane segment at 12-33 (LMLAVGGAVLGSLQFGYNTGVI) threads the bilayer. The Extracellular segment spans residues 34–66 (NAPQKVIEEFYNQTWNHRYGEPIPSTTLTTLWS). N-linked (GlcNAc...) asparagine glycosylation occurs at Asn45. Residues 67–87 (LSVAIFSVGGMIGSFSVGLFV) form a helical membrane-spanning segment. Residues 88–90 (NRF) lie on the Cytoplasmic side of the membrane. Residues 91–112 (GRRNSMLMMNLLAFVAAVLMGF) form a helical membrane-spanning segment. Topologically, residues 113–120 (SKLGKSFE) are extracellular. The chain crosses the membrane as a helical span at residues 121 to 144 (MLILGRFIIGVYCGLTTGFVPMYV). Residues 145 to 155 (GEVSPTALRGA) lie on the Cytoplasmic side of the membrane. Residues 156-176 (LGTLHQLGIVVGILIAQVFGL) traverse the membrane as a helical segment. Gln161 lines the D-glucose pocket. The Extracellular portion of the chain corresponds to 177 to 185 (DSIMGNADL). The helical transmembrane segment at 186 to 206 (WPLLLSVIFIPALLQCILLPF) threads the bilayer. The Cytoplasmic portion of the chain corresponds to 207-271 (CPESPRFLLI…LFRSPAYRQP (65 aa)). Ser226 carries the post-translational modification Phosphoserine. A helical membrane pass occupies residues 272-293 (ILIAVVLQLSQQLSGINAVFYY). Residues 282 to 283 (QQ) and Asn288 each bind D-glucose. The Extracellular segment spans residues 294-306 (STSIFEKAGVQQP). A helical membrane pass occupies residues 307-328 (VYATIGSGIVNTAFTVVSLFVV). Asn317 lines the D-glucose pocket. At 329 to 334 (ERAGRR) the chain is on the cytoplasmic side. Residues 335-355 (TLHLIGLAGMAGCAVLMTIAL) form a helical membrane-spanning segment. Topologically, residues 356-365 (ALLERLPWMS) are extracellular. Residues 366 to 388 (YLSIVAIFGFVAFFEVGPGPIPW) form a helical membrane-spanning segment. D-glucose contacts are provided by Glu380 and Trp388. Topologically, residues 389–401 (FIVAELFSQGPRP) are cytoplasmic. Residues 402–422 (AAIAVAGFSNWTSNFIVGMCF) traverse the membrane as a helical segment. The Extracellular portion of the chain corresponds to 423 to 429 (QYVEQLC). A helical transmembrane segment spans residues 430–450 (GPYVFIIFTVLLVLFFIFTYF). The Cytoplasmic portion of the chain corresponds to 451–492 (KVPETKGRTFDEIASGFRQGGASQSDKTPEELFHPLGADSQV). Position 465 is a phosphoserine (Ser465). Residues 468–492 (RQGGASQSDKTPEELFHPLGADSQV) form a disordered region. Phosphothreonine is present on Thr478. Phosphoserine is present on Ser490.

Belongs to the major facilitator superfamily. Sugar transporter (TC 2.A.1.1) family. Glucose transporter subfamily. Found in a complex with ADD2, DMTN and SLC2A1. Interacts (via C-terminus cytoplasmic region) with DMTN isoform 2. Interacts with SNX27; the interaction is required when endocytosed to prevent degradation in lysosomes and promote recycling to the plasma membrane. Interacts with GIPC (via PDZ domain). Interacts with STOM. Interacts with SGTA (via Gln-rich region). Interacts with isoform 1 of BSG. Interacts with SMIM43; the interaction may promote SLC2A1-mediated glucose transport to meet the energy needs of mesendoderm differentiation. Post-translationally, phosphorylation at Ser-226 by PKC promotes glucose uptake by increasing cell membrane localization. In terms of tissue distribution, retina (at protein level).

It is found in the cell membrane. It localises to the photoreceptor inner segment. The catalysed reaction is D-glucose(out) = D-glucose(in). The uptake of glucose is inhibited by cytochalasin B. Glucose uptake is increased in response to phorbol ester 12-O-tetradecanoylphorbol-13-acetate (TPA) treatment: TPA-induced glucose uptake requires phosphorylation at Ser-226. Its function is as follows. Facilitative glucose transporter, which is responsible for constitutive or basal glucose uptake. Has a very broad substrate specificity; can transport a wide range of aldoses including both pentoses and hexoses. Most important energy carrier of the brain: present at the blood-brain barrier and assures the energy-independent, facilitative transport of glucose into the brain. In association with BSG and NXNL1, promotes retinal cone survival by increasing glucose uptake into photoreceptors. Required for mesendoderm differentiation. The protein is Solute carrier family 2, facilitated glucose transporter member 1 of Mus musculus (Mouse).